Reading from the N-terminus, the 209-residue chain is Uracil phosphoribosyltransferase (209 aa).

5-phospho-alpha-D-ribose 1-diphosphate-binding positions include Arg-79, Arg-104, and 131 to 139 (DPLLATGNS). Uracil-binding positions include Ile-194 and 199–201 (GDA). Asp-200 is a 5-phospho-alpha-D-ribose 1-diphosphate binding site.

It belongs to the UPRTase family. Mg(2+) is required as a cofactor.

It catalyses the reaction UMP + diphosphate = 5-phospho-alpha-D-ribose 1-diphosphate + uracil. The protein operates within pyrimidine metabolism; UMP biosynthesis via salvage pathway; UMP from uracil: step 1/1. Its activity is regulated as follows. Allosterically activated by GTP. Functionally, catalyzes the conversion of uracil and 5-phospho-alpha-D-ribose 1-diphosphate (PRPP) to UMP and diphosphate. The polypeptide is Uracil phosphoribosyltransferase (Rhodococcus opacus (strain B4)).